The following is a 555-amino-acid chain: E3 ubiquitin-protein ligase NEURL1B (555 aa).

The NHR 1 domain occupies 38–194 (APRFHAQAKG…ITDEVQLLES (157 aa)). Residue Thr199 is modified to Phosphothreonine. The NHR 2 domain occupies 279-433 (DLRFHATRGP…GVAGQLRLLG (155 aa)). The disordered stretch occupies residues 436-493 (QSSPATTTPSGSLSGSQDDSDSDMTFSVNQSSSASESSLVTAPSSPLSPPVSPVFSPP). Residues 462-480 (SVNQSSSASESSLVTAPSS) show a composition bias toward low complexity. Pro residues predominate over residues 481 to 493 (PLSPPVSPVFSPP). An RING-type zinc finger spans residues 503–543 (CTVCFDGEVDTVIYTCGHMCLCHSCGLRLKRQARACCPICR).

As to quaternary structure, interacts with JAG1, DLL1 and DLL4. Highest expression in brain, prostate and small intestine. In the brain the levels are higher in fetal than in adult stage. In the adult brain the highest levels are detected in the olfactory system, cerebellar cortex, optic nerve and the frontal lobe.

Its subcellular location is the cytoplasm. The catalysed reaction is S-ubiquitinyl-[E2 ubiquitin-conjugating enzyme]-L-cysteine + [acceptor protein]-L-lysine = [E2 ubiquitin-conjugating enzyme]-L-cysteine + N(6)-ubiquitinyl-[acceptor protein]-L-lysine.. It functions in the pathway protein modification; protein ubiquitination. Functionally, E3 ubiquitin-protein ligase involved in regulation of the Notch pathway through influencing the stability and activity of several Notch ligands. In Homo sapiens (Human), this protein is E3 ubiquitin-protein ligase NEURL1B (NEURL1B).